Consider the following 207-residue polypeptide: Guanylate kinase (207 aa).

The Guanylate kinase-like domain occupies 4 to 184; the sequence is GLLFIVSAPS…AVSDLYKIIR (181 aa). Position 11-18 (11-18) interacts with ATP; the sequence is APSGTGKS.

It belongs to the guanylate kinase family.

It localises to the cytoplasm. The catalysed reaction is GMP + ATP = GDP + ADP. Essential for recycling GMP and indirectly, cGMP. The chain is Guanylate kinase from Buchnera aphidicola subsp. Baizongia pistaciae (strain Bp).